The following is a 138-amino-acid chain: 1,4-dihydroxy-2-naphthoyl-CoA hydrolase (138 aa).

Asp-14 is an active-site residue.

The protein belongs to the 4-hydroxybenzoyl-CoA thioesterase family. DHNA-CoA hydrolase subfamily.

It catalyses the reaction 1,4-dihydroxy-2-naphthoyl-CoA + H2O = 1,4-dihydroxy-2-naphthoate + CoA + H(+). Its pathway is cofactor biosynthesis; phylloquinone biosynthesis. It functions in the pathway quinol/quinone metabolism; 1,4-dihydroxy-2-naphthoate biosynthesis; 1,4-dihydroxy-2-naphthoate from chorismate: step 7/7. Functionally, catalyzes the hydrolysis of 1,4-dihydroxy-2-naphthoyl-CoA (DHNA-CoA) to 1,4-dihydroxy-2-naphthoate (DHNA), a reaction involved in phylloquinone (vitamin K1) biosynthesis. The sequence is that of 1,4-dihydroxy-2-naphthoyl-CoA hydrolase from Rippkaea orientalis (strain PCC 8801 / RF-1) (Cyanothece sp. (strain PCC 8801)).